The sequence spans 264 residues: Small ribosomal subunit protein eS1 (264 aa).

Residues 232-264 (HGEGGGAGKPSGDEAGTKVERADGYEPPVQESV) form a disordered region. The segment covering 242 to 255 (SGDEAGTKVERADG) has biased composition (basic and acidic residues).

It belongs to the eukaryotic ribosomal protein eS1 family. Component of the small ribosomal subunit. Mature ribosomes consist of a small (40S) and a large (60S) subunit. The 40S subunit contains about 33 different proteins and 1 molecule of RNA (18S). The 60S subunit contains about 49 different proteins and 3 molecules of RNA (28S, 5.8S and 5S). Part of the small subunit (SSU) processome, composed of more than 70 proteins and the RNA chaperone small nucleolar RNA (snoRNA) U3.

The protein localises to the cytoplasm. It is found in the nucleus. It localises to the nucleolus. Component of the small ribosomal subunit. The ribosome is a large ribonucleoprotein complex responsible for the synthesis of proteins in the cell. Part of the small subunit (SSU) processome, first precursor of the small eukaryotic ribosomal subunit. During the assembly of the SSU processome in the nucleolus, many ribosome biogenesis factors, an RNA chaperone and ribosomal proteins associate with the nascent pre-rRNA and work in concert to generate RNA folding, modifications, rearrangements and cleavage as well as targeted degradation of pre-ribosomal RNA by the RNA exosome. May play a role during erythropoiesis. The protein is Small ribosomal subunit protein eS1 of Taeniopygia guttata (Zebra finch).